A 356-amino-acid polypeptide reads, in one-letter code: Probable dual-specificity RNA methyltransferase RlmN (356 aa).

Residue glutamate 100 is the Proton acceptor of the active site. In terms of domain architecture, Radical SAM core spans 106–340 (TNSRLTTCVS…VSLRASRGLD (235 aa)). Cysteine 113 and cysteine 345 form a disulfide bridge. [4Fe-4S] cluster-binding residues include cysteine 120, cysteine 124, and cysteine 127. S-adenosyl-L-methionine-binding positions include 167-168 (GE), serine 197, 226-228 (SLH), and asparagine 302. The active-site S-methylcysteine intermediate is cysteine 345.

The protein belongs to the radical SAM superfamily. RlmN family. It depends on [4Fe-4S] cluster as a cofactor.

The protein resides in the cytoplasm. The catalysed reaction is adenosine(2503) in 23S rRNA + 2 reduced [2Fe-2S]-[ferredoxin] + 2 S-adenosyl-L-methionine = 2-methyladenosine(2503) in 23S rRNA + 5'-deoxyadenosine + L-methionine + 2 oxidized [2Fe-2S]-[ferredoxin] + S-adenosyl-L-homocysteine. The enzyme catalyses adenosine(37) in tRNA + 2 reduced [2Fe-2S]-[ferredoxin] + 2 S-adenosyl-L-methionine = 2-methyladenosine(37) in tRNA + 5'-deoxyadenosine + L-methionine + 2 oxidized [2Fe-2S]-[ferredoxin] + S-adenosyl-L-homocysteine. In terms of biological role, specifically methylates position 2 of adenine 2503 in 23S rRNA and position 2 of adenine 37 in tRNAs. In Prochlorococcus marinus (strain MIT 9211), this protein is Probable dual-specificity RNA methyltransferase RlmN.